A 219-amino-acid chain; its full sequence is Probable nicotinate-nucleotide adenylyltransferase (219 aa).

Belongs to the NadD family.

It catalyses the reaction nicotinate beta-D-ribonucleotide + ATP + H(+) = deamido-NAD(+) + diphosphate. It participates in cofactor biosynthesis; NAD(+) biosynthesis; deamido-NAD(+) from nicotinate D-ribonucleotide: step 1/1. Functionally, catalyzes the reversible adenylation of nicotinate mononucleotide (NaMN) to nicotinic acid adenine dinucleotide (NaAD). The sequence is that of Probable nicotinate-nucleotide adenylyltransferase from Herminiimonas arsenicoxydans.